The sequence spans 259 residues: Ribonuclease HII (259 aa).

One can recognise an RNase H type-2 domain in the interval 70 to 258; that stretch reads TLIAGIDEVG…VKSLVLGKKE (189 aa). Positions 76, 77, and 168 each coordinate a divalent metal cation.

It belongs to the RNase HII family. Requires Mn(2+) as cofactor. The cofactor is Mg(2+).

The protein localises to the cytoplasm. It carries out the reaction Endonucleolytic cleavage to 5'-phosphomonoester.. Endonuclease that specifically degrades the RNA of RNA-DNA hybrids. This Streptococcus pneumoniae (strain 70585) protein is Ribonuclease HII.